Here is a 340-residue protein sequence, read N- to C-terminus: tRNA-dihydrouridine(20/20a) synthase (340 aa).

FMN contacts are provided by residues Pro-22–Met-24 and Gln-75. Cys-105 serves as the catalytic Proton donor. Residues Lys-144, His-177, Asn-217–Gly-219, and Gly-239–Arg-240 each bind FMN.

The protein belongs to the Dus family. DusA subfamily. It depends on FMN as a cofactor.

It catalyses the reaction 5,6-dihydrouridine(20) in tRNA + NADP(+) = uridine(20) in tRNA + NADPH + H(+). The enzyme catalyses 5,6-dihydrouridine(20) in tRNA + NAD(+) = uridine(20) in tRNA + NADH + H(+). It carries out the reaction 5,6-dihydrouridine(20a) in tRNA + NADP(+) = uridine(20a) in tRNA + NADPH + H(+). The catalysed reaction is 5,6-dihydrouridine(20a) in tRNA + NAD(+) = uridine(20a) in tRNA + NADH + H(+). In terms of biological role, catalyzes the synthesis of 5,6-dihydrouridine (D), a modified base found in the D-loop of most tRNAs, via the reduction of the C5-C6 double bond in target uridines. Specifically modifies U20 and U20a in tRNAs. The chain is tRNA-dihydrouridine(20/20a) synthase from Xylella fastidiosa (strain 9a5c).